A 343-amino-acid polypeptide reads, in one-letter code: 5-amino-6-(D-ribitylamino)uracil--L-tyrosine 4-hydroxyphenyl transferase (343 aa).

Positions 39–268 (VTYVVNRNIN…AIARILLYPE (230 aa)) constitute a Radical SAM core domain. [4Fe-4S] cluster contacts are provided by Cys53, Cys57, and Cys60.

The protein belongs to the radical SAM superfamily. CofH family. In terms of assembly, consists of two subunits, CofG and CofH. [4Fe-4S] cluster serves as cofactor.

The catalysed reaction is 5-amino-6-(D-ribitylamino)uracil + L-tyrosine + S-adenosyl-L-methionine = 5-amino-5-(4-hydroxybenzyl)-6-(D-ribitylimino)-5,6-dihydrouracil + 2-iminoacetate + 5'-deoxyadenosine + L-methionine + H(+). It functions in the pathway cofactor biosynthesis; coenzyme F0 biosynthesis. Catalyzes the radical-mediated synthesis of 5-amino-5-(4-hydroxybenzyl)-6-(D-ribitylimino)-5,6-dihydrouracil from 5-amino-6-(D-ribitylamino)uracil and L-tyrosine. The sequence is that of 5-amino-6-(D-ribitylamino)uracil--L-tyrosine 4-hydroxyphenyl transferase from Archaeoglobus fulgidus (strain ATCC 49558 / DSM 4304 / JCM 9628 / NBRC 100126 / VC-16).